The primary structure comprises 1339 residues: DNA polymerase alpha catalytic subunit (1339 aa).

Disordered regions lie at residues 1-90 (MSGG…SMSD) and 177-203 (NVERDQSAKPPRPRPTPGAGGGAGYRN). Residues 27 to 36 (DQWRSLREEV) are compositionally biased toward basic and acidic residues. Residues 79–89 (PKQQTLAQSMS) are compositionally biased toward polar residues. 8 residues coordinate Zn(2+): cysteine 1179, cysteine 1182, cysteine 1213, cysteine 1216, cysteine 1233, cysteine 1243, cysteine 1271, and cysteine 1286. Residues 1179–1216 (CTHCRLMTPINPHTRVMEVLADQERQRDRFDLYVCVSC) form a CysA-type zinc finger. A CysB motif motif is present at residues 1243 to 1271 (CGSAAAVKAVRTQFTYYRALFDVPHAPGC).

Belongs to the DNA polymerase type-B family.

The protein localises to the nucleus. The enzyme catalyses DNA(n) + a 2'-deoxyribonucleoside 5'-triphosphate = DNA(n+1) + diphosphate. In terms of biological role, polymerase alpha in a complex with DNA primase is a replicative polymerase. This is DNA polymerase alpha catalytic subunit from Leishmania donovani.